The primary structure comprises 510 residues: MTTLSSINLSIPPHLLPSTTNTCSSSSATSCSPPRSSSFVLHSPLSFGHRRLPISKKSKLRFCGVITKEAVSGSNDMTITQVREDDESEIDAPLLDPESLSKPRRIALFVEPSPFAYVSGYKNRFQNFIRYLREMGDEVIVVTTHEGVPEEFYGARVIGSRSFPCPYYQKVPLSLALSPRIISEIARFKPDIIHASSPGVMVFGALAIAKMLSVPIVMSYHTHVPVYIPRYTFSWLVKPMWSIIRFLHRAADLTLVPSAAIGKDLIAAGATAANQLRLWNKGVDSESFNPRFRSQEMRIRLSNGEPEKPLVIHVGRIGVEKSLELLKSVMDKLPEARIAFIGDGPYKEDLEKLFTGMPAVFTGTLQGDELSQAYASGDVFVMPSESETLGLVVLEAMSSGLPVVAARAGGIPDIIPEDQEGKTGFLFNPGDVEDCVTKLRTLLHDRETREIIGKAAREETEKYDWRAATTKIRNEQYSAAIWFWRKKKVHVLGPINWLIKRLFPVPEGNV.

Residues 1–83 (MTTLSSINLS…SNDMTITQVR (83 aa)) constitute a chloroplast transit peptide. At Ser-88 the chain carries Phosphoserine. A helical transmembrane segment spans residues 198–218 (PGVMVFGALAIAKMLSVPIVM).

The protein belongs to the glycosyltransferase group 1 family. Glycosyltransferase 4 subfamily.

The protein localises to the plastid. The protein resides in the chloroplast membrane. The enzyme catalyses UDP-alpha-D-6-sulfoquinovose + a 1,2-diacyl-sn-glycerol = a 6-sulfo-alpha-D-quinovosyldiacylglycerol + UDP + H(+). Its pathway is glycolipid biosynthesis. Its function is as follows. Catalyzes the transfer of the sulfoquinovose moiety from UDP-sulfoquinovose to diacylglycerol during sulfolipid biosynthesis. Sulfolipid contributes to maintaining a negatively charged lipid-water interface, a requirement for proper function of photosynthetic membranes. Sulfolipid may also function as a substitute of anionic phospholipids under phosphate-limited growth conditions. The protein is Sulfoquinovosyl transferase SQD2 of Arabidopsis thaliana (Mouse-ear cress).